The primary structure comprises 154 residues: Protein SprT-like (154 aa).

The SprT-like domain maps to leucine 6–phenylalanine 144. Histidine 67 contacts Zn(2+). Residue glutamate 68 is part of the active site. Histidine 71 provides a ligand contact to Zn(2+).

Belongs to the SprT family. Requires Zn(2+) as cofactor.

It localises to the cytoplasm. This Shouchella clausii (strain KSM-K16) (Alkalihalobacillus clausii) protein is Protein SprT-like.